Consider the following 100-residue polypeptide: Urease subunit gamma (100 aa).

Belongs to the urease gamma subunit family. In terms of assembly, heterotrimer of UreA (gamma), UreB (beta) and UreC (alpha) subunits. Three heterotrimers associate to form the active enzyme.

The protein resides in the cytoplasm. The enzyme catalyses urea + 2 H2O + H(+) = hydrogencarbonate + 2 NH4(+). It functions in the pathway nitrogen metabolism; urea degradation; CO(2) and NH(3) from urea (urease route): step 1/1. This is Urease subunit gamma from Haemophilus influenzae (strain ATCC 51907 / DSM 11121 / KW20 / Rd).